Here is a 495-residue protein sequence, read N- to C-terminus: Protein SLENDER RICE1-LIKE 1 (495 aa).

The region spanning 77–449 is the GRAS domain; it reads EEEEVAGIRL…RPLFSASAWE (373 aa). The leucine repeat I (LRI) stretch occupies residues 84-140; it reads IRLVHLLMSCAGAIEAGDHALASAQLADSHAALAAVSAASGIGRVAVHFTTALSRRL. The interval 158-223 is VHIID; sequence YHHFYEACPY…GGPPFLRITG (66 aa). Positions 189–193 match the VHIID motif; the sequence is VHVID. The interval 237 to 269 is leucine repeat II (LRII); sequence DVGLRLADLARSVRVRFSFRGVAANSLDEVRPW. The interval 279–371 is PFYRE; the sequence is VAFNSVLQLH…EAYLQREICD (93 aa). Positions 287 to 291 match the LXXLL motif motif; that stretch reads LHRLL. An SAW region spans residues 374–449; sequence CGEGAARRER…RPLFSASAWE (76 aa). Residues 451–495 form a disordered region; the sequence is AGDGGGDNNNNSNSNVSGSSGSDSNNSGSSNGKSSGARDGSSVCL. The segment covering 458–485 has biased composition (low complexity); that stretch reads NNNNSNSNVSGSSGSDSNNSGSSNGKSS.

This sequence belongs to the GRAS family. As to expression, expressed in elongating internodes and flowers. Expressed in floral meristem, stamen primordia and tapetum in developing anthers. Expressed at low levels in roots, shoot apices and rachis.

The protein localises to the nucleus. In terms of biological role, probable transcriptional regulator that acts as a repressor of the gibberellin (GA) signaling pathway. Its repressive activity is weaker than that of SLR1. Its overexpression prevents the GA signaling pathway and induces a dwarf phenotype. The protein is Protein SLENDER RICE1-LIKE 1 of Oryza sativa subsp. japonica (Rice).